The following is a 40-amino-acid chain: Mu-thomitoxin-Hme1b (40 aa).

Disulfide bonds link C2–C18, C9–C22, and C17–C33.

It belongs to the neurotoxin 19 (CSTX) family. Contains 3 disulfide bonds. Expressed by the venom gland.

The protein localises to the secreted. Functionally, blocks the Nav1.2/SCN2A, Nav1.4/SCN4A, Nav1.5/SCN5A and Nav1.6/SCN8A sodium channels. Shows a slight preference for the Nav1.2 and Nav1.4 channels. Reduces the peak amplitude of the sodium current and negatively shifts the steady-state inactivation process. Does not shift the threshold potential of activation or the voltage corresponding to maximal current. Does not change the reversal potential of the sodium current. May act on site 1 of the receptor. This Heriaeus mellotteei (Crab spider) protein is Mu-thomitoxin-Hme1b.